The sequence spans 354 residues: MTELKNDRYLRALLRQPVDVTPVWMMRQAGRYLPEYKATRAQAGDFMSLCKNAELACEVTLQPLRRYPLDAAILFSDILTIPDAMGLGLYFEAGEGPRFTSPIKSKADVDKLPIPDPEQELGYVMNAVRTIRRELKGEVPLIGFSGSPWTLATYMVEGGSSKAFTVIKKMMYAEPQALHALLEKLAKSVTLYLNAQIKAGAQSVMIFDTWGGVLTGRDYQQFSLYYMHKIVDGLLRENEGRRVPVTLFTKGGGQWLEAMAETGCDALGLDWTTDIADARRRVGHKVALQGNMDPSMLYAPAPRIEEEVATILAGFGQGEGHVFNLGHGIHQDVDPQHAGVFVEAVHRLSTPYHQ.

Substrate is bound by residues 27–31 (RQAGR), Asp-77, Tyr-154, Thr-209, and His-327.

The protein belongs to the uroporphyrinogen decarboxylase family. Homodimer.

It is found in the cytoplasm. The enzyme catalyses uroporphyrinogen III + 4 H(+) = coproporphyrinogen III + 4 CO2. The protein operates within porphyrin-containing compound metabolism; protoporphyrin-IX biosynthesis; coproporphyrinogen-III from 5-aminolevulinate: step 4/4. In terms of biological role, catalyzes the decarboxylation of four acetate groups of uroporphyrinogen-III to yield coproporphyrinogen-III. In Klebsiella pneumoniae (strain 342), this protein is Uroporphyrinogen decarboxylase.